The sequence spans 119 residues: Large ribosomal subunit protein bL12 (119 aa).

This sequence belongs to the bacterial ribosomal protein bL12 family. As to quaternary structure, homodimer. Part of the ribosomal stalk of the 50S ribosomal subunit. Forms a multimeric L10(L12)X complex, where L10 forms an elongated spine to which 2 to 4 L12 dimers bind in a sequential fashion. Binds GTP-bound translation factors.

Functionally, forms part of the ribosomal stalk which helps the ribosome interact with GTP-bound translation factors. Is thus essential for accurate translation. The sequence is that of Large ribosomal subunit protein bL12 from Bacillus anthracis (strain A0248).